The following is a 212-amino-acid chain: MGRVEKFRFYRQSFDNNKIVKKALINAQKNTESWKKQLNKINQKILINYHPFSEFNKNPVKHHTEPNKLFKTLQELIVDLKNTDFKLLEEKVDRMWLNAAYNQTSSGYESWISDDKGIEKINHLSKFYEANEKQWLKKTSNLTSDLKEYNKILTVFSTESFAFKKSIDNIEPNLFNANKAIFKNLVITLISFMLFSILFFLIFLIVSFVSFV.

A helical membrane pass occupies residues 186–206 (VITLISFMLFSILFFLIFLIV).

It localises to the membrane. This is an uncharacterized protein from Mycoplasma genitalium (strain ATCC 33530 / DSM 19775 / NCTC 10195 / G37) (Mycoplasmoides genitalium).